A 224-amino-acid polypeptide reads, in one-letter code: Peptidyl-prolyl cis-trans isomerase CYP21-1 (224 aa).

A signal peptide spans 1–27 (MRREISFLLQPRCLLLLVALTIFLVFA). The PPIase cyclophilin-type domain occupies 50–214 (FLDVDIDGQR…KKVVIADSGE (165 aa)). A glycan (N-linked (GlcNAc...) asparagine) is linked at asparagine 158.

The protein belongs to the cyclophilin-type PPIase family. As to expression, ubiquitous.

It localises to the endoplasmic reticulum. It catalyses the reaction [protein]-peptidylproline (omega=180) = [protein]-peptidylproline (omega=0). Functionally, PPIases accelerate the folding of proteins. It catalyzes the cis-trans isomerization of proline imidic peptide bonds in oligopeptides. The sequence is that of Peptidyl-prolyl cis-trans isomerase CYP21-1 (CYP21-1) from Arabidopsis thaliana (Mouse-ear cress).